A 466-amino-acid chain; its full sequence is Cell division protein FtsP (466 aa).

The tat-type signal signal peptide spans 1 to 28 (MGNYSRRRFLQGSLAIVAGNVLPCAAMA).

This sequence belongs to the FtsP family. Post-translationally, predicted to be exported by the Tat system. The position of the signal peptide cleavage has not been experimentally proven.

It is found in the periplasm. Its function is as follows. Cell division protein that is required for growth during stress conditions. May be involved in protecting or stabilizing the divisomal assembly under conditions of stress. This is Cell division protein FtsP from Gallibacterium anatis (strain UMN179) (Pasteurella anatis).